Consider the following 153-residue polypeptide: Endoribonuclease YbeY (153 aa).

Zn(2+)-binding residues include H116, H120, and H126.

The protein belongs to the endoribonuclease YbeY family. The cofactor is Zn(2+).

It is found in the cytoplasm. In terms of biological role, single strand-specific metallo-endoribonuclease involved in late-stage 70S ribosome quality control and in maturation of the 3' terminus of the 16S rRNA. This chain is Endoribonuclease YbeY, found in Paraburkholderia phymatum (strain DSM 17167 / CIP 108236 / LMG 21445 / STM815) (Burkholderia phymatum).